Here is a 345-residue protein sequence, read N- to C-terminus: IGF-like family receptor 1 (345 aa).

A signal peptide spans 1 to 20 (MGPSWLLWTVAVAVLLLTRA). Topologically, residues 21-163 (ASMEASSFCG…SSRPGFVSAS (143 aa)) are extracellular. A glycan (N-linked (GlcNAc...) asparagine) is linked at asparagine 87. The interval 106-149 (VESPGRTHKQCRKKPVPPKDVCPLKPEDAGASSSPGRWSLGQTT) is disordered. Positions 111–121 (RTHKQCRKKPV) are enriched in basic residues. The span at 136–149 (ASSSPGRWSLGQTT) shows a compositional bias: polar residues. Residues 164–184 (VLPLAVLPLLLVLLLILAVVL) traverse the membrane as a helical segment. Residues 185–345 (LSLFKRKVRS…DALQVLSKLG (161 aa)) lie on the Cytoplasmic side of the membrane.

Ubiquitously expressed with higher expression in lymph node. Highly expressed in T-cells and monocytes.

The protein localises to the cell membrane. Probable cell membrane receptor for the IGF-like family protein IGFL. In Mus musculus (Mouse), this protein is IGF-like family receptor 1 (Igflr1).